The sequence spans 845 residues: Receptor-like protein Cf-9 homolog (845 aa).

Residues 1 to 19 (MGCVKLVFFMLLKLDLLEF) form the signal peptide. The interval 20 to 70 (KNMFTVNPNASDYCYDYTDQRMQSYPRTLFWNKSTDCCSWDGIHCDETTGQ) is N-cap. Over 20 to 794 (KNMFTVNPNA…EEDSPMISWQ (775 aa)) the chain is Extracellular. N-linked (GlcNAc...) asparagine glycosylation is found at asparagine 28, asparagine 51, and asparagine 88. The stretch at 71–94 (VVELDLRCSQLQGKFHSNSSLFQL) is one LRR 1; degenerate repeat. LRR repeat units follow at residues 95-118 (SNLK…KFGE), 119-143 (FSDL…ISHL), 144-171 (SKLH…LKNL), 172-193 (TQLR…SNFS), 194-217 (SHLT…VFHL), 219-242 (DLEF…KWNS), 244-266 (ASLM…SFSH), 267-291 (LTSL…LWNL), 292-316 (TNIE…RFEK), 318-338 (KRLS…SFNR), 340-364 (WTQL…VSGL), 365-388 (QNLG…IFSL), 390-410 (SLVV…EFKS), 411-434 (KTLS…LLNQ), 436-458 (SLQF…ICNL), 459-482 (KTLM…VGER), 484-506 (EYLL…TFSI), 507-531 (GNSF…LINC), 532-554 (KYLK…WLGY), 555-579 (LSQL…GSTN), 581-605 (FMRL…ILGN), 649-672 (LDSN…IIGD), 673-696 (LVGL…SFQN), 698-721 (SVLE…LASL), and 723-741 (FLEV…IPKG). Asparagine 131, asparagine 170, asparagine 183, and asparagine 191 each carry an N-linked (GlcNAc...) asparagine glycan. N-linked (GlcNAc...) asparagine glycosylation is present at asparagine 241. 2 N-linked (GlcNAc...) asparagine glycosylation sites follow: asparagine 279 and asparagine 290. N-linked (GlcNAc...) asparagine glycosylation is found at asparagine 337, asparagine 360, asparagine 378, and asparagine 398. N-linked (GlcNAc...) asparagine glycosylation is present at asparagine 446. Asparagine 501 carries N-linked (GlcNAc...) asparagine glycosylation. N-linked (GlcNAc...) asparagine glycosylation occurs at asparagine 545. Residues asparagine 656, asparagine 680, and asparagine 696 are each glycosylated (N-linked (GlcNAc...) asparagine). N-linked (GlcNAc...) asparagine glycosylation is found at asparagine 728 and asparagine 749. Positions 742 to 794 (KQFDSFGNTSYQGNDGLRGFPLSKLCGVDDQVTTPAELDQEEEEEDSPMISWQ) are C-cap/acidic domain. The helical transmembrane segment at 795-815 (GVLVGYGCGLVIGLSVIYIMW) threads the bilayer. Residues 816 to 845 (STQYPAWFSRMDLKLEHIITTRMKKHKKRY) are Cytoplasmic-facing.

Belongs to the RLP family.

Its subcellular location is the cell membrane. Its function is as follows. At the opposite of its homolog Cf-9 found in S.pimpinellifolium, was not able to confer resistance to the fungal pathogen C.fulvum. The sequence is that of Receptor-like protein Cf-9 homolog from Solanum lycopersicum (Tomato).